Consider the following 218-residue polypeptide: MMTFHPSPPQLTLIKSMLFIAALLPFGRLALFTLTDQLGANPIEFITRNTGDWTLYFLCMTLAITPLRRLSQWNWLIRLRRMLGLFAFFYACLHFTTFLWFDHFFDVNEMLKDVVKRPFITVGFSAFVLLIPLAITSTNGMVKRLGGKRWQWLHRLVYVIAALGILHYWWMKAGKHDFEQPIIFGTIVAVLLLVRVFWAWQKRSKNNALAGTSDCRTG.

Transmembrane regions (helical) follow at residues 12–32 (TLIKSMLFIAALLPFGRLALF), 82–102 (MLGLFAFFYACLHFTTFLWFD), 118–138 (PFITVGFSAFVLLIPLAITST), 150–170 (WQWLHRLVYVIAALGILHYWW), and 180–200 (QPIIFGTIVAVLLLVRVFWAW).

Belongs to the MsrQ family. As to quaternary structure, heterodimer of a catalytic subunit (MsrP) and a heme-binding subunit (MsrQ). FMN is required as a cofactor. Heme b serves as cofactor.

Its subcellular location is the cell inner membrane. Part of the MsrPQ system that repairs oxidized periplasmic proteins containing methionine sulfoxide residues (Met-O), using respiratory chain electrons. Thus protects these proteins from oxidative-stress damage caused by reactive species of oxygen and chlorine generated by the host defense mechanisms. MsrPQ is essential for the maintenance of envelope integrity under bleach stress, rescuing a wide series of structurally unrelated periplasmic proteins from methionine oxidation. MsrQ provides electrons for reduction to the reductase catalytic subunit MsrP, using the quinone pool of the respiratory chain. In Herminiimonas arsenicoxydans, this protein is Protein-methionine-sulfoxide reductase heme-binding subunit MsrQ.